Here is a 308-residue protein sequence, read N- to C-terminus: U-box domain-containing protein 54 (308 aa).

Positions 172–235 (FSEFSTSAEK…NESDEDPRLE (64 aa)) are disordered. The span at 210–227 (ESPKKGRKETIEKSKSNE) shows a compositional bias: basic and acidic residues. The region spanning 232-306 (PRLEDFKCPI…KDWLEKNPNY (75 aa)) is the U-box domain.

It catalyses the reaction S-ubiquitinyl-[E2 ubiquitin-conjugating enzyme]-L-cysteine + [acceptor protein]-L-lysine = [E2 ubiquitin-conjugating enzyme]-L-cysteine + N(6)-ubiquitinyl-[acceptor protein]-L-lysine.. Its pathway is protein modification; protein ubiquitination. Functions as an E3 ubiquitin ligase. The sequence is that of U-box domain-containing protein 54 (PUB54) from Arabidopsis thaliana (Mouse-ear cress).